The primary structure comprises 351 residues: Adenine deaminase (351 aa).

Zn(2+) contacts are provided by H19, H21, and H208. E211 serves as the catalytic Proton donor. Residue D288 participates in Zn(2+) binding. D289 contributes to the substrate binding site.

The protein belongs to the metallo-dependent hydrolases superfamily. Adenosine and AMP deaminases family. Adenine deaminase type 2 subfamily. The cofactor is Zn(2+).

Its subcellular location is the cytoplasm. The protein resides in the nucleus. It carries out the reaction adenine + H2O + H(+) = hypoxanthine + NH4(+). Its function is as follows. Catalyzes the hydrolytic deamination of adenine to hypoxanthine. Plays an important role in the purine salvage pathway and in nitrogen catabolism. In Aspergillus oryzae (strain ATCC 42149 / RIB 40) (Yellow koji mold), this protein is Adenine deaminase (aah1).